The chain runs to 435 residues: Antho-RFamide neuropeptides type 1 (435 aa).

Residues 1–22 (MTTVSYVTILLTVLVQVLTSDA) form the signal peptide. Positions 23–193 (KATNNKRELS…SVPGRYGREL (171 aa)) are excised as a propeptide. Position 194 is a pyrrolidone carboxylic acid (Q194). The residue at position 197 (F197) is a Phenylalanine amide. Residues 199-201 (REL) constitute a propeptide that is removed on maturation. A Phenylalanine amide modification is found at F205. Residues 207 to 209 (REA) constitute a propeptide that is removed on maturation. Residue F213 is modified to Phenylalanine amide. Residues 215–217 (REL) constitute a propeptide that is removed on maturation. F221 bears the Phenylalanine amide mark. Residues 223 to 225 (REF) constitute a propeptide that is removed on maturation. Residue F229 is modified to Phenylalanine amide. The segment covering 230 to 371 (GREDQGRFGR…EDIAEADQGR (142 aa)) has biased composition (basic and acidic residues). Disordered regions lie at residues 230 to 374 (GRED…RFGR) and 386 to 435 (AKKR…AKTS). A propeptide spanning residues 231–233 (RED) is cleaved from the precursor. F237 is subject to Phenylalanine amide. Residues 239–241 (RED) constitute a propeptide that is removed on maturation. F245 is subject to Phenylalanine amide. A propeptide spanning residues 247–249 (RED) is cleaved from the precursor. The residue at position 253 (F253) is a Phenylalanine amide. Residues 255 to 257 (RED) constitute a propeptide that is removed on maturation. F261 is modified (phenylalanine amide). The propeptide occupies 263–265 (RED). F269 bears the Phenylalanine amide mark. Residues 271 to 273 (RED) constitute a propeptide that is removed on maturation. A Phenylalanine amide modification is found at F277. A propeptide spanning residues 279–281 (REL) is cleaved from the precursor. Position 285 is a phenylalanine amide (F285). Positions 287-289 (REF) are excised as a propeptide. F293 is subject to Phenylalanine amide. Residues 295-297 (RED) constitute a propeptide that is removed on maturation. Residue F301 is modified to Phenylalanine amide. Positions 303 to 305 (RED) are excised as a propeptide. F309 bears the Phenylalanine amide mark. The propeptide occupies 311 to 313 (REL). The residue at position 317 (F317) is a Phenylalanine amide. A propeptide spanning residues 319–321 (RED) is cleaved from the precursor. Position 325 is a phenylalanine amide (F325). Residues 327–329 (RED) constitute a propeptide that is removed on maturation. F333 is subject to Phenylalanine amide. Positions 335-342 (REDLAKED) are excised as a propeptide. A Phenylalanine amide modification is found at F346. The propeptide occupies 348 to 355 (REDLAKED). F359 is subject to Phenylalanine amide. Residues 361 to 368 (REDIAEAD) constitute a propeptide that is removed on maturation. The residue at position 372 (F372) is a Phenylalanine amide. The propeptide occupies 374-435 (RNAAAAAAAA…KSDDALAKTS (62 aa)). Basic and acidic residues predominate over residues 398 to 435 (SDPKPQTRFRDGKDMQEKRKVEKKDKIEKSDDALAKTS).

The protein belongs to the FARP (FMRFamide related peptide) family.

The protein resides in the secreted. Functionally, not known but it could act as a transmitter at neuromuscular synapses. The sequence is that of Antho-RFamide neuropeptides type 1 from Anthopleura elegantissima (Green aggregating anemone).